The sequence spans 580 residues: D-erythrulose kinase (580 aa).

Residues 7 to 327 (DPARFTEDML…WAAPADTPAY (321 aa)) enclose the DhaK domain. The Tele-hemiaminal-histidine intermediate role is filled by H217. Residues 329–360 (KGAAQQHVSGERRSEATARSASSGPKLAELSD) form a disordered region. Residues 368–570 (RLVARAFDAM…LALCARTVAD (203 aa)) enclose the DhaL domain. ATP is bound by residues 397–403 (DGDHGRG), 443–444 (TS), G485, R542, and 555–557 (DAG).

It carries out the reaction D-erythrulose + ATP = D-erythrulose 4-phosphate + ADP + H(+). Its pathway is carbohydrate metabolism; erythritol degradation. It participates in carbohydrate metabolism; D-threitol degradation. Catalyzes the phosphorylation of D-erythrulose to D-erythrulose-4P. Involved in the degradation pathways of erythritol and D-threitol, that allow M.smegmatis to grow on these compounds as the sole carbon source. This Mycolicibacterium smegmatis (strain ATCC 700084 / mc(2)155) (Mycobacterium smegmatis) protein is D-erythrulose kinase.